The primary structure comprises 360 residues: Protein RecA (360 aa).

77–84 (GPESSGKT) serves as a coordination point for ATP.

The protein belongs to the RecA family.

Its subcellular location is the cytoplasm. Functionally, can catalyze the hydrolysis of ATP in the presence of single-stranded DNA, the ATP-dependent uptake of single-stranded DNA by duplex DNA, and the ATP-dependent hybridization of homologous single-stranded DNAs. It interacts with LexA causing its activation and leading to its autocatalytic cleavage. This Chelativorans sp. (strain BNC1) protein is Protein RecA.